The primary structure comprises 192 residues: Peptidyl-tRNA hydrolase (192 aa).

Residue H19 is the Proton acceptor of the active site. TRNA contacts are provided by Y64, N66, and N112.

This sequence belongs to the PTH family. Monomer.

The protein resides in the cytoplasm. The enzyme catalyses an N-acyl-L-alpha-aminoacyl-tRNA + H2O = an N-acyl-L-amino acid + a tRNA + H(+). In terms of biological role, hydrolyzes ribosome-free peptidyl-tRNAs (with 1 or more amino acids incorporated), which drop off the ribosome during protein synthesis, or as a result of ribosome stalling. Its function is as follows. Catalyzes the release of premature peptidyl moieties from peptidyl-tRNA molecules trapped in stalled 50S ribosomal subunits, and thus maintains levels of free tRNAs and 50S ribosomes. The protein is Peptidyl-tRNA hydrolase of Acidiphilium cryptum (strain JF-5).